Here is a 234-residue protein sequence, read N- to C-terminus: Accessory gland protein Acp29AB (234 aa).

The signal sequence occupies residues 1 to 21 (MYASNLLYLLALWNLWDLSGG). N-linked (GlcNAc...) asparagine glycosylation is found at Asn-61 and Asn-164. Residues 137–234 (VTCRKMNGHL…SFVCQADQWA (98 aa)) enclose the C-type lectin domain. Intrachain disulfides connect Cys-139-Cys-228 and Cys-207-Cys-220.

Main cells of the accessory gland and in seminal fluid.

It is found in the secreted. Responsible for physiological and behavioral changes in mated female flies. This is Accessory gland protein Acp29AB (Acp29AB) from Drosophila melanogaster (Fruit fly).